Here is a 369-residue protein sequence, read N- to C-terminus: Flagellar P-ring protein 2 (369 aa).

An N-terminal signal peptide occupies residues 1–24 (MCAFAAILSLLSVLLMATSRSSDA).

It belongs to the FlgI family. The basal body constitutes a major portion of the flagellar organelle and consists of four rings (L,P,S, and M) mounted on a central rod.

The protein localises to the periplasm. It is found in the bacterial flagellum basal body. In terms of biological role, assembles around the rod to form the L-ring and probably protects the motor/basal body from shearing forces during rotation. The chain is Flagellar P-ring protein 2 from Burkholderia thailandensis (strain ATCC 700388 / DSM 13276 / CCUG 48851 / CIP 106301 / E264).